A 233-amino-acid chain; its full sequence is Nucleoside diphosphate kinase 2, chloroplastic (233 aa).

A chloroplast-targeting transit peptide spans 1-67 (MEAMSGLSSP…LISHSLPRKK (67 aa)). The ATP site is built by lysine 93, phenylalanine 141, arginine 169, threonine 175, arginine 186, and asparagine 196. The active-site Pros-phosphohistidine intermediate is the histidine 199.

Belongs to the NDK family. Mg(2+) serves as cofactor.

Its subcellular location is the plastid. It localises to the chloroplast. The enzyme catalyses a 2'-deoxyribonucleoside 5'-diphosphate + ATP = a 2'-deoxyribonucleoside 5'-triphosphate + ADP. The catalysed reaction is a ribonucleoside 5'-diphosphate + ATP = a ribonucleoside 5'-triphosphate + ADP. Major role in the synthesis of nucleoside triphosphates other than ATP. The ATP gamma phosphate is transferred to the NDP beta phosphate via a ping-pong mechanism, using a phosphorylated active-site intermediate. The protein is Nucleoside diphosphate kinase 2, chloroplastic (NDPK2) of Spinacia oleracea (Spinach).